The primary structure comprises 509 residues: Maturase K (509 aa).

Belongs to the intron maturase 2 family. MatK subfamily.

The protein localises to the plastid. Its subcellular location is the chloroplast. Functionally, usually encoded in the trnK tRNA gene intron. Probably assists in splicing its own and other chloroplast group II introns. The sequence is that of Maturase K from Abies firma (Momi fir).